The primary structure comprises 118 residues: uncharacterized protein (118 aa).

The next 3 helical transmembrane spans lie at 22–44, 54–71, and 78–99; these read IIASIVGAVIIAAAISALLFSIA, LSPLVYSIVSLAVIPVLR, and PILSLLTAFSIPILFLSGVEWL.

The protein localises to the cell membrane. This is an uncharacterized protein from Archaeoglobus fulgidus (strain ATCC 49558 / DSM 4304 / JCM 9628 / NBRC 100126 / VC-16).